A 465-amino-acid chain; its full sequence is GTPase Der (465 aa).

2 EngA-type G domains span residues 3 to 167 (PLVA…PERS) and 179 to 352 (IHIA…VSAL). GTP is bound by residues 9–16 (GRPNVGKS), 57–61 (DTGGM), 119–122 (NKID), 185–192 (GRPNVGKS), 232–236 (DTAGL), and 297–300 (NKWD). One can recognise a KH-like domain in the interval 353 to 437 (RQFSTSEVNK…PVRFLFREGD (85 aa)).

Belongs to the TRAFAC class TrmE-Era-EngA-EngB-Septin-like GTPase superfamily. EngA (Der) GTPase family. In terms of assembly, associates with the 50S ribosomal subunit.

In terms of biological role, GTPase that plays an essential role in the late steps of ribosome biogenesis. This is GTPase Der from Xylella fastidiosa (strain M23).